The chain runs to 601 residues: Ribosomal oxygenase 1 (601 aa).

A compositionally biased stretch (basic and acidic residues) spans 1-11 (MAACGAEERQR). The disordered stretch occupies residues 1–149 (MAACGAEERQ…PGGGGVPGLL (149 aa)). Residues 61 to 70 (ERAAPPQGAA) are compositionally biased toward low complexity. The segment covering 73–87 (DRVERAGSSEAKQGD) has biased composition (basic and acidic residues). A JmjC domain is found at 254 to 399 (CSLRLLSPQA…DFLEKLLPAA (146 aa)). Fe cation contacts are provided by histidine 300, aspartate 302, and histidine 365.

It belongs to the ROX family. NO66 subfamily. Fe(2+) is required as a cofactor.

The protein resides in the nucleus. It localises to the nucleolus. The protein localises to the nucleoplasm. It catalyses the reaction N(6),N(6)-dimethyl-L-lysyl(36)-[histone H3] + 2 2-oxoglutarate + 2 O2 = L-lysyl(36)-[histone H3] + 2 formaldehyde + 2 succinate + 2 CO2. The catalysed reaction is N(6)-methyl-L-lysyl-[protein] + 2-oxoglutarate + O2 = L-lysyl-[protein] + formaldehyde + succinate + CO2. It carries out the reaction L-histidyl-[protein] + 2-oxoglutarate + O2 = (3S)-3-hydroxy-L-histidyl-[protein] + succinate + CO2. Its function is as follows. Oxygenase that can act as both a histone lysine demethylase and a ribosomal histidine hydroxylase. Specifically demethylates 'Lys-4' (H3K4me) and 'Lys-36' (H3K36me) of histone H3, thereby playing a central role in histone code. Preferentially demethylates trimethylated H3 'Lys-4' (H3K4me3) and monomethylated H3 'Lys-4' (H3K4me1) residues, while it has weaker activity for dimethylated H3 'Lys-36' (H3K36me2). Also catalyzes demethylation of non-histone proteins. Also catalyzes the hydroxylation of 60S ribosomal protein L8 on 'His-216', thereby playing a role in ribosome biogenesis. In Gallus gallus (Chicken), this protein is Ribosomal oxygenase 1 (RIOX1).